The sequence spans 1147 residues: MFTLSLLSRGHGKLVQNKQKLEVYFEPEDYLNWKSPEDYILVRKPQDEGNADQHTWSLFLPKTFSTRKGALILYSEGLAISAWTPEERRKGPYRPKGRRKRPDLELHTLQDLKEAILAYGRRQREQDRAWQPYLHFRSQPESQGLRQIQPGYSAKRYLRGLLRTWPPGTINKLQCAGYIKDSVLLQDSQLNVPKNLRPQQDLSGVPLKYHLLPVFPPFWIQQGKSFGQGQQDLDEGEAGAGGQVDQGSVVKDRGIQGTCLPPLKKQPWQKDETQTEDTSKDNHHCIHTSKENHQEKAQQTSRRTLGHALFDHSWLLHDKSHTTFYYGGTFPNRKADLSDKQGTMKLHQGRSSHLFKEPPAERCLFPPVASAAGSEKNMPGDMKKKKAPKALKLPLISEEPPRVLDPLRSQLKASEPPAELFIFPVEIHYHSQHPPKGKAQRRGAPQPESAPETEEYTSSWRPPLKQVSLRGSRALRVHLPMDTDRDTLSPQEDVAPPQKGTSSPSLRKGKKSPESQRGPDSPRTSGRSSPTGPPCERPAGGALPAAGQAYESVSSNAGHGEEESSIQHLLKVNTESRTDLHMNLNETSPLTQKPENQGAQQSLEAAAQKTGEPQSCINKGLICSNRKEFYTRKLHLDMTPFLKASREEMDDHEEGGELRENHPDAQDPVRRNMTLDPLCASLAKHMQTPEADTVQKASKDYNVHHRHRGLSGHGPDSPEGLDPIDTSFLPRGKEGKTEPRLFNQKTSNNISNEMELIEKAKSRKRAKTDKSKAPKREKEGKLHEEAEAAVGKSKESKAEKKSQLISKGKKTGAKGKRTRKEGNLETAAELSGPDGINSKETKDRSGGGFFRSGSGVEDPWVSSKVEAPESQVSIDGRSSPTQTAAVPGNMEPEEDRSHEDPSKAFLVKREQEKASRDRLRAERAEMRRLEVERKRREQEEQRRLQQEQLERAERMKEELELEQQRRVEEIRLRKQRLEEERQWQEEEERRQWLQLQMAQERARQQQEEFRRKCQELQRKKQQEEAERAEAEKQRLKELEMQLAEEQKHLMEMAEEERLEYQRRKQEAEEKTRWEAEDRRQKEKEAARLAQEEAMKQAQDQARQKDALKKHLHFHQELHKEASGLQWTHNISRPWVYSYFHFLQIPRP.

Disordered regions lie at residues 226–245 (FGQG…GQVD), 255–297 (IQGT…QEKA), 431–617 (SQHP…QSCI), 647–670 (EEMD…DPVR), 705–945 (HRHR…RRLQ), 1003–1032 (RQQQ…EAEK), and 1060–1090 (YQRR…RLAQ). The span at 268–296 (WQKDETQTEDTSKDNHHCIHTSKENHQEK) shows a compositional bias: basic and acidic residues. A compositionally biased stretch (basic residues) spans 431-441 (SQHPPKGKAQR). Low complexity predominate over residues 538-549 (PAGGALPAAGQA). Polar residues predominate over residues 584–603 (LNETSPLTQKPENQGAQQSL). Polar residues predominate over residues 743–752 (NQKTSNNISN). Residues 743–804 (NQKTSNNISN…ESKAEKKSQL (62 aa)) adopt a coiled-coil conformation. Over residues 768–802 (TDKSKAPKREKEGKLHEEAEAAVGKSKESKAEKKS) the composition is skewed to basic and acidic residues. Basic residues predominate over residues 807 to 819 (KGKKTGAKGKRTR). Residues 870-884 (SQVSIDGRSSPTQTA) show a composition bias toward polar residues. The segment covering 895-945 (DRSHEDPSKAFLVKREQEKASRDRLRAERAEMRRLEVERKRREQEEQRRLQ) has biased composition (basic and acidic residues). Residues 907-1112 (VKREQEKASR…QKDALKKHLH (206 aa)) are a coiled coil.

This is an uncharacterized protein from Bos taurus (Bovine).